The chain runs to 322 residues: MIWLEENMIKITFCFFKVIFILLLIVFSSAMLSIVERRLLAVFQNRYGPNRVGWMGSLQLCADMIKILFKEDWIPPFSRKFIFVLSPVIAFTSLLCVIPIIPFTSHFVIIDLNIGILFFLMMASLSVYAILFAGWSSNNKYALLGAMRACVQTLSYEVFLGLSLMGVVAQSGSFKISDIVNSQKYIWNVFPQFFGFLTFLIAGLAVCHRHPFDQPESEQELADGYHIEYSGMKFGLFFIGEYISIITVSSLIVTLFFGGWLGPWIPGCIWFILKIIFFIFLFILIRAALPRPRYDQVLLFGWKFCLPLTLFNLFLTAFLILV.

9 helical membrane passes run 15–35, 50–69, 81–101, 114–134, 149–169, 186–206, 237–257, 265–285, and 302–322; these read FFKV…LSIV, NRVG…KILF, FIFV…IPII, IGIL…LFAG, ACVQ…GVVA, IWNV…GLAV, FFIG…TLFF, IPGC…FILI, and WKFC…LILV.

This sequence belongs to the complex I subunit 1 family. NDH-1 is composed of 13 different subunits. Subunits NuoA, H, J, K, L, M, N constitute the membrane sector of the complex.

It localises to the cell membrane. It carries out the reaction a quinone + NADH + 5 H(+)(in) = a quinol + NAD(+) + 4 H(+)(out). Functionally, NDH-1 shuttles electrons from NADH, via FMN and iron-sulfur (Fe-S) centers, to quinones in the respiratory chain. The immediate electron acceptor for the enzyme in this species is believed to be ubiquinone. Couples the redox reaction to proton translocation (for every two electrons transferred, four hydrogen ions are translocated across the cytoplasmic membrane), and thus conserves the redox energy in a proton gradient. This subunit may bind ubiquinone. This chain is NADH-quinone oxidoreductase subunit H, found in Buchnera aphidicola subsp. Acyrthosiphon pisum (strain 5A).